A 328-amino-acid polypeptide reads, in one-letter code: Tetraacyldisaccharide 4'-kinase (328 aa).

Residue threonine 55–threonine 62 participates in ATP binding.

The protein belongs to the LpxK family.

It catalyses the reaction a lipid A disaccharide + ATP = a lipid IVA + ADP + H(+). It functions in the pathway glycolipid biosynthesis; lipid IV(A) biosynthesis; lipid IV(A) from (3R)-3-hydroxytetradecanoyl-[acyl-carrier-protein] and UDP-N-acetyl-alpha-D-glucosamine: step 6/6. In terms of biological role, transfers the gamma-phosphate of ATP to the 4'-position of a tetraacyldisaccharide 1-phosphate intermediate (termed DS-1-P) to form tetraacyldisaccharide 1,4'-bis-phosphate (lipid IVA). The polypeptide is Tetraacyldisaccharide 4'-kinase (Shigella boydii serotype 4 (strain Sb227)).